Reading from the N-terminus, the 78-residue chain is Defensin-like protein 308 (78 aa).

Residues 1–19 (MKTSAFFIAVLLILSCSSS) form the signal peptide. Cystine bridges form between Cys-31/Cys-50, Cys-37/Cys-55, and Cys-41/Cys-57.

The protein belongs to the DEFL family.

The protein resides in the secreted. The chain is Defensin-like protein 308 from Arabidopsis thaliana (Mouse-ear cress).